The chain runs to 235 residues: Homeobox-leucine zipper protein ATHB-12 (235 aa).

The segment at residues 27–86 (KSNNQKRFSEEQIKSLELIFESETRLEPRKKVQVARELGLQPRQVAIWFQNKRARWKTKQ) is a DNA-binding region (homeobox). The segment at 87–122 (LEKEYNTLRANYNNLASQFEIMKKEKQSLVSELQRL) is leucine-zipper. Composition is skewed to basic and acidic residues over residues 128 to 138 (RPKEEKHHECC) and 152 to 162 (HNGKSEPEGRL). Residues 128 to 167 (RPKEEKHHECCGDQGLALSSSTESHNGKSEPEGRLDQGSV) are disordered.

The protein belongs to the HD-ZIP homeobox family. Class I subfamily. As to quaternary structure, interacts with TFIIB1. Widely expressed.

Its subcellular location is the nucleus. Functionally, probable transcription activator that may act as growth regulators in response to water deficit. The chain is Homeobox-leucine zipper protein ATHB-12 (ATHB-12) from Arabidopsis thaliana (Mouse-ear cress).